The sequence spans 705 residues: Cell cycle serine/threonine-protein kinase CDC5/MSD2 (705 aa).

Thr23 carries the phosphothreonine modification. The span at 41-53 shows a compositional bias: basic and acidic residues; it reads QTKRLDPNNDHHH. Residues 41-63 are disordered; the sequence is QTKRLDPNNDHHHQPAQKKKREK. In terms of domain architecture, Protein kinase spans 82-337; the sequence is YHRGHFLGEG…LTEIMDYVWF (256 aa). Residues 88 to 96 and Lys110 each bind ATP; that span reads LGEGGFARC. Asp204 (proton acceptor) is an active-site residue. The residue at position 419 (Ser419) is a Phosphoserine. The POLO box 1 domain maps to 513 to 595; it reads IVTKWVDYSN…VDFFAKYMKA (83 aa). Zn(2+)-binding residues include Glu553, His569, His609, and Asp612. A POLO box 2 domain is found at 614 to 700; sequence FLRRYTRYKP…IKEGLKQKST (87 aa).

It belongs to the protein kinase superfamily. Ser/Thr protein kinase family. CDC5/Polo subfamily. As to quaternary structure, interacts with CDC48; the interaction is likely to result in CDC5 degradation. Interacts with CSA1.

It is found in the cytoplasm. It localises to the cytoskeleton. The protein resides in the microtubule organizing center. The protein localises to the spindle pole body. The enzyme catalyses L-seryl-[protein] + ATP = O-phospho-L-seryl-[protein] + ADP + H(+). It carries out the reaction L-threonyl-[protein] + ATP = O-phospho-L-threonyl-[protein] + ADP + H(+). Functionally, protein kinase required for the cell cycle where it is involved in mitotic exit. A component of the fear (CDC14 early anaphase release) network which promotes CDC14 release from the nucleolus during early anaphase. Phosphorylates SCC1/MCD1 and NET1. This Saccharomyces cerevisiae (strain ATCC 204508 / S288c) (Baker's yeast) protein is Cell cycle serine/threonine-protein kinase CDC5/MSD2 (CDC5).